Reading from the N-terminus, the 264-residue chain is uncharacterized protein (264 aa).

An NADP(+)-binding site is contributed by 13–20 (TGSTSGIG). Position 141 (serine 141) interacts with substrate. The Proton acceptor role is filled by tyrosine 154.

The protein belongs to the short-chain dehydrogenases/reductases (SDR) family.

This is an uncharacterized protein from Bacillus subtilis (strain 168).